The primary structure comprises 67 residues: Conotoxin LeDr192 (67 aa).

The signal sequence occupies residues 1 to 19 (MRCFPVFIILLLLIASAPC). Positions 20 to 49 (FDARTKTDDDVPLSPLRDNLKRTIRTRLNI) are excised as a propeptide. Thr-65 bears the Threonine amide mark.

The protein belongs to the conotoxin T superfamily. In terms of processing, contains 2 disulfide bonds that can be either 'C1-C3, C2-C4' or 'C1-C4, C2-C3', since these disulfide connectivities have been observed for conotoxins with cysteine framework V (for examples, see AC P0DQQ7 and AC P81755). As to expression, expressed by the venom duct.

Its subcellular location is the secreted. This is Conotoxin LeDr192 from Conus litteratus (Lettered cone).